A 456-amino-acid polypeptide reads, in one-letter code: Bifunctional protein GlmU (456 aa).

The tract at residues 1-229 (MSNSSMSVVI…LSEVEGVNNR (229 aa)) is pyrophosphorylase. Residues 11-14 (LAAG), Lys25, Gln76, 81-82 (GT), 103-105 (YGD), Gly140, Glu154, Asn169, and Asn227 each bind UDP-N-acetyl-alpha-D-glucosamine. Asp105 serves as a coordination point for Mg(2+). Asn227 contacts Mg(2+). Residues 230–250 (LQLAALERVYQSEQAEKLLLA) form a linker region. Residues 251–456 (GVMLLDPARF…QGWQRPIKKK (206 aa)) form an N-acetyltransferase region. Arg333 and Lys351 together coordinate UDP-N-acetyl-alpha-D-glucosamine. The Proton acceptor role is filled by His363. Residues Tyr366 and Asn377 each contribute to the UDP-N-acetyl-alpha-D-glucosamine site. Acetyl-CoA-binding positions include Ala380, 386–387 (NY), Ser405, Ala423, and Arg440.

It in the N-terminal section; belongs to the N-acetylglucosamine-1-phosphate uridyltransferase family. This sequence in the C-terminal section; belongs to the transferase hexapeptide repeat family. As to quaternary structure, homotrimer. The cofactor is Mg(2+).

The protein localises to the cytoplasm. It catalyses the reaction alpha-D-glucosamine 1-phosphate + acetyl-CoA = N-acetyl-alpha-D-glucosamine 1-phosphate + CoA + H(+). The catalysed reaction is N-acetyl-alpha-D-glucosamine 1-phosphate + UTP + H(+) = UDP-N-acetyl-alpha-D-glucosamine + diphosphate. It functions in the pathway nucleotide-sugar biosynthesis; UDP-N-acetyl-alpha-D-glucosamine biosynthesis; N-acetyl-alpha-D-glucosamine 1-phosphate from alpha-D-glucosamine 6-phosphate (route II): step 2/2. It participates in nucleotide-sugar biosynthesis; UDP-N-acetyl-alpha-D-glucosamine biosynthesis; UDP-N-acetyl-alpha-D-glucosamine from N-acetyl-alpha-D-glucosamine 1-phosphate: step 1/1. The protein operates within bacterial outer membrane biogenesis; LPS lipid A biosynthesis. Functionally, catalyzes the last two sequential reactions in the de novo biosynthetic pathway for UDP-N-acetylglucosamine (UDP-GlcNAc). The C-terminal domain catalyzes the transfer of acetyl group from acetyl coenzyme A to glucosamine-1-phosphate (GlcN-1-P) to produce N-acetylglucosamine-1-phosphate (GlcNAc-1-P), which is converted into UDP-GlcNAc by the transfer of uridine 5-monophosphate (from uridine 5-triphosphate), a reaction catalyzed by the N-terminal domain. In Yersinia enterocolitica serotype O:8 / biotype 1B (strain NCTC 13174 / 8081), this protein is Bifunctional protein GlmU.